We begin with the raw amino-acid sequence, 252 residues long: Carbohydrate deacetylase (252 aa).

Mg(2+) is bound by residues H59 and H122.

Belongs to the YdjC deacetylase family. Homodimer. The cofactor is Mg(2+).

In terms of biological role, probably catalyzes the deacetylation of acetylated carbohydrates an important step in the degradation of oligosaccharides. This Vibrio cholerae serotype O1 (strain ATCC 39315 / El Tor Inaba N16961) protein is Carbohydrate deacetylase.